Consider the following 317-residue polypeptide: sn-1-specific diacylglycerol lipase ABHD11 (317 aa).

Residues 1-20 (MSNFAMSALCRVFTRGAPCG) constitute a mitochondrion transit peptide. Residues 69–304 (PLVFLHGLFG…ASHWIHADKP (236 aa)) enclose the AB hydrolase-1 domain. Residues Ser142, Glu238, and His297 each act as charge relay system in the active site.

This sequence belongs to the AB hydrolase superfamily. Post-translationally, phosphorylated.

It is found in the mitochondrion. The protein resides in the mitochondrion matrix. It carries out the reaction 1-octadecanoyl-2-(5Z,8Z,11Z,14Z-eicosatetraenoyl)-sn-glycerol + H2O = 2-(5Z,8Z,11Z,14Z-eicosatetraenoyl)-glycerol + octadecanoate + H(+). The enzyme catalyses a 1,2-diacyl-sn-glycerol + H2O = a 2-acylglycerol + a fatty acid + H(+). The catalysed reaction is a 1,3-diacyl-sn-glycerol + H2O = a 1-acyl-sn-glycerol + a fatty acid + H(+). It catalyses the reaction 1-octadecanoyl-2-(9Z-octadecenoyl)-sn-glycerol + H2O = 2-(9Z-octadecenoyl)-glycerol + octadecanoate + H(+). It carries out the reaction 1-octadecanoyl-2-(4Z,7Z,10Z,13Z,16Z,19Z-docosahexaenoyl)-sn-glycerol + H2O = 2-(4Z,7Z,10Z,13Z,16Z,19Z-docosahexaenoyl)-glycerol + octadecanoate + H(+). The enzyme catalyses 1,2-didecanoylglycerol + H2O = decanoylglycerol + decanoate + H(+). Functionally, catalyzes the hydrolysis of diacylglycerol in vitro and may function as a key regulator in lipid metabolism, namely by regulating the intracellular levels of diacylglycerol. 1,2-diacyl-sn-glycerols are the preferred substrate over 1,3-diacyl-sn-glycerols. The enzyme hydrolyzes stearate in preference to palmitate from the sn-1 position of 1,2-diacyl-sn-glycerols. This chain is sn-1-specific diacylglycerol lipase ABHD11, found in Danio rerio (Zebrafish).